The primary structure comprises 641 residues: Sodium-dependent nutrient amino acid transporter 1 (641 aa).

Residues 1-36 are disordered; that stretch reads MELKGVQPSNGSANGNGTTNAASTEKTDAEKHTPER. Over 1–38 the chain is Cytoplasmic; it reads MELKGVQPSNGSANGNGTTNAASTEKTDAEKHTPERTN. Residues 9 to 24 are compositionally biased toward low complexity; the sequence is SNGSANGNGTTNAAST. Over residues 25–35 the composition is skewed to basic and acidic residues; the sequence is EKTDAEKHTPE. 3 helical membrane-spanning segments follow: residues 39–59, 72–92, and 109–129; these read WGNG…LGNV, GAFL…MYYL, and SVVP…ICII. N-linked (GlcNAc...) asparagine glycosylation is found at asparagine 183 and asparagine 188. Helical transmembrane passes span 229–249, 258–278, 307–327, 341–361, 401–421, 441–461, 474–494, 516–536, and 552–572; these read PDWK…LVIM, AAYF…IRAV, AVVQ…MFAS, IVTT…FAIL, LFSV…IVAL, VALI…TPGG, TYVV…VYGL, CWSF…MVTI, and IAGW…GLWY.

The protein belongs to the sodium:neurotransmitter symporter (SNF) (TC 2.A.22) family.

It localises to the membrane. Functionally, unusual broad substrate spectrum amino acid:sodium cotransporter that promotes absorption of the D isomers of essential amino acids. Neutral amino acids are the preferred substrates, especially methionine and phenylalanine. This chain is Sodium-dependent nutrient amino acid transporter 1, found in Drosophila erecta (Fruit fly).